Here is a 285-residue protein sequence, read N- to C-terminus: Probable endonuclease 4 (285 aa).

9 residues coordinate Zn(2+): histidine 69, histidine 109, glutamate 145, aspartate 179, histidine 182, histidine 216, aspartate 229, histidine 231, and glutamate 261.

This sequence belongs to the AP endonuclease 2 family. Zn(2+) is required as a cofactor.

It catalyses the reaction Endonucleolytic cleavage to 5'-phosphooligonucleotide end-products.. Its function is as follows. Endonuclease IV plays a role in DNA repair. It cleaves phosphodiester bonds at apurinic or apyrimidinic (AP) sites, generating a 3'-hydroxyl group and a 5'-terminal sugar phosphate. The sequence is that of Probable endonuclease 4 from Escherichia coli O1:K1 / APEC.